A 30-amino-acid polypeptide reads, in one-letter code: Bowman-Birk type proteinase inhibitor 3 (30 aa).

Intrachain disulfides connect Cys-9–Cys-24 and Cys-14–Cys-22.

Its function is as follows. Inhibits trypsin (IC(50)=4.90 nM) and, to a lesser extent, alpha-chymotrypsin (IC(50)=1.87 uM). The polypeptide is Bowman-Birk type proteinase inhibitor 3 (Lathyrus sativus (White vetchling)).